A 93-amino-acid chain; its full sequence is UPF0147 protein MJ1419 (93 aa).

This sequence belongs to the UPF0147 family.

The polypeptide is UPF0147 protein MJ1419 (Methanocaldococcus jannaschii (strain ATCC 43067 / DSM 2661 / JAL-1 / JCM 10045 / NBRC 100440) (Methanococcus jannaschii)).